The primary structure comprises 95 residues: MEHGEKQITIVDDNGNEQLCEVLFTFESDHFNKSYVLYYPISEQDNEEIEIHASSFTPNENGEDGELEPIETDEEWDMIEETLNTFLDQEEEDEE.

Belongs to the UPF0473 family.

The protein is UPF0473 protein BPUM_2377 of Bacillus pumilus (strain SAFR-032).